A 1915-amino-acid polypeptide reads, in one-letter code: Protein NLRC5 (1915 aa).

The tract at residues 103 to 137 is disordered; it reads LGAGEESCPGPQLYHGAKRPFQSYGSSPRRKNSKK. An NACHT domain is found at 223 to 542; that stretch reads RVTVLLGKAG…HTVDKDTLVE (320 aa). 229–236 serves as a coordination point for ATP; it reads GKAGMGKT. LRR repeat units follow at residues 622–646, 716–740, 744–771, 772–796, 871–898, 900–923, 930–953, 1006–1033, 1034–1055, 1138–1161, 1162–1184, 1240–1263, 1265–1292, 1348–1371, 1481–1504, 1519–1542, 1552–1575, 1576–1598, 1603–1626, 1631–1654, 1659–1682, 1687–1711, 1715–1738, 1741–1768, 1769–1795, 1821–1845, and 1849–1872; these read VAET…SFHN, MGSL…LIQT, CSQL…LLPS, LPKL…LVKV, SPQL…AASQ, HIAQ…VLKA, LEDL…PREQ, THNL…LLPG, LGPL…VFSL, EVQL…LPQL, PQLS…LLAD, CNAL…CLLE, LPQL…LLET, AQQL…MLLN, SKLL…FSQV, CHHL…LLMG, KLHL…LSRM, TLLQ…CLAA, LPEL…CLAA, LPEL…LVKS, FEHL…ELAQ, PPQL…ALEQ, CPHI…RLPL, FPAL…LAQV, and MGQL…LLAQ.

The protein belongs to the NLRP family. As to quaternary structure, interacts with CHUK and IKBKB; prevents CHUK and IKBKB phosphorylation and inhibits their kinase activity. Interacts with RIGI and IFIH1; blocks the interaction of MAVS to RIGI. Expressed in spleen, thymus and lung.

The protein localises to the cytoplasm. Functionally, probable regulator of the NF-kappa-B and type I interferon signaling pathways. May also regulate the type II interferon signaling pathway. Plays a role in homeostatic control of innate immunity and in antiviral defense mechanisms. This Mus musculus (Mouse) protein is Protein NLRC5 (Nlrc5).